The sequence spans 274 residues: Cytochrome b-c1 complex subunit Rieske, mitochondrial (274 aa).

At 79-103 the chain is on the mitochondrial matrix side; that stretch reads SHTDVKVPDFYDYRRLEVLDSTKSS. The helical transmembrane segment at 104-140 threads the bilayer; the sequence is RESSEARKGFSYLVTAVTTVGVAYAAKNVVTQFISSM. The Mitochondrial intermembrane segment spans residues 141–274; it reads SASADVLAMA…FTGDDVVVVG (134 aa). Residues 187 to 272 enclose the Rieske domain; the sequence is EAAVELSQLR…YEFTGDDVVV (86 aa). [2Fe-2S] cluster contacts are provided by Cys-217, His-219, Cys-236, His-239, and Ser-241. Cys-222 and Cys-238 form a disulfide bridge.

It belongs to the Rieske iron-sulfur protein family. In terms of assembly, component of the ubiquinol-cytochrome c oxidoreductase (cytochrome b-c1 complex, complex III, CIII), a multisubunit enzyme composed of 11 subunits. The complex is composed of 3 respiratory subunits cytochrome b, cytochrome c1 and Rieske protein UQCRFS1, 2 core protein subunits UQCRC1/QCR1 and UQCRC2/QCR2, and 6 low-molecular weight protein subunits UQCRH/QCR6, UQCRB/QCR7, UQCRQ/QCR8, UQCR10/QCR9, UQCR11/QCR10 and subunit 9, the cleavage product of Rieske protein UQCRFS1. The complex exists as an obligatory dimer and forms supercomplexes (SCs) in the inner mitochondrial membrane with NADH-ubiquinone oxidoreductase (complex I, CI) and cytochrome c oxidase (complex IV, CIV), resulting in different assemblies (supercomplex SCI(1)III(2)IV(1) and megacomplex MCI(2)III(2)IV(2)). Incorporation of the Rieske protein UQCRFS1 is the penultimate step in complex III assembly. Interacts with TTC19, which is involved in the clearance of UQCRFS1 fragments. Component of the ubiquinol-cytochrome c oxidoreductase (cytochrome b-c1 complex, complex III, CIII). Subunit 9 corresponds to the mitochondrial targeting sequence (MTS) of Rieske protein UQCRFS1. It is retained after processing and incorporated inside complex III, where it remains bound to the complex and localizes between the 2 core subunits UQCRC1/QCR1 and UQCRC2/QCR2. Requires [2Fe-2S] cluster as cofactor. Proteolytic processing is necessary for the correct insertion of UQCRFS1 in the complex III dimer. Several fragments are generated during UQCRFS1 insertion, most probably due to the endogenous matrix-processing peptidase (MPP) activity of the 2 core protein subunits UQCRC1/QCR1 and UQCRC2/QCR2, which are homologous to the 2 mitochondrial-processing peptidase (MPP) subunits beta-MPP and alpha-MPP respectively. The action of the protease is also necessary for the clearance of the UQCRFS1 fragments.

The protein resides in the mitochondrion inner membrane. The catalysed reaction is a quinol + 2 Fe(III)-[cytochrome c](out) = a quinone + 2 Fe(II)-[cytochrome c](out) + 2 H(+)(out). Component of the ubiquinol-cytochrome c oxidoreductase, a multisubunit transmembrane complex that is part of the mitochondrial electron transport chain which drives oxidative phosphorylation. The respiratory chain contains 3 multisubunit complexes succinate dehydrogenase (complex II, CII), ubiquinol-cytochrome c oxidoreductase (cytochrome b-c1 complex, complex III, CIII) and cytochrome c oxidase (complex IV, CIV), that cooperate to transfer electrons derived from NADH and succinate to molecular oxygen, creating an electrochemical gradient over the inner membrane that drives transmembrane transport and the ATP synthase. The cytochrome b-c1 complex catalyzes electron transfer from ubiquinol to cytochrome c, linking this redox reaction to translocation of protons across the mitochondrial inner membrane, with protons being carried across the membrane as hydrogens on the quinol. In the process called Q cycle, 2 protons are consumed from the matrix, 4 protons are released into the intermembrane space and 2 electrons are passed to cytochrome c. The Rieske protein is a catalytic core subunit containing a [2Fe-2S] iron-sulfur cluster. It cycles between 2 conformational states during catalysis to transfer electrons from the quinol bound in the Q(0) site in cytochrome b to cytochrome c1. Incorporation of UQCRFS1 is the penultimate step in complex III assembly. In terms of biological role, component of the ubiquinol-cytochrome c oxidoreductase (cytochrome b-c1 complex, complex III, CIII). UQCRFS1 undergoes proteolytic processing once it is incorporated in the complex III dimer. One of the fragments, called subunit 9, corresponds to its mitochondrial targeting sequence (MTS). The proteolytic processing is necessary for the correct insertion of UQCRFS1 in the complex III dimer, but the persistence of UQCRFS1-derived fragments may prevent newly imported UQCRFS1 to be processed and assembled into complex III and is detrimental for the complex III structure and function. The polypeptide is Cytochrome b-c1 complex subunit Rieske, mitochondrial (UQCRFS1) (Chlorocebus aethiops (Green monkey)).